A 387-amino-acid polypeptide reads, in one-letter code: Flap endonuclease 1 (387 aa).

The interval 1–104 (MGILGLSKLI…GELAKRAERR (104 aa)) is N-domain. Mg(2+) is bound at residue aspartate 34. Residues arginine 47 and arginine 70 each coordinate DNA. Aspartate 86, glutamate 158, glutamate 160, aspartate 179, and aspartate 181 together coordinate Mg(2+). The tract at residues 122–253 (GIEKFNRRLV…KRAIELINNY (132 aa)) is I-domain. A DNA-binding site is contributed by glutamate 158. DNA is bound by residues glycine 231 and aspartate 233. Position 233 (aspartate 233) interacts with Mg(2+). The tract at residues 336–344 (TQVRLDSFF) is interaction with PCNA. The interval 346–387 (TLPSTPNATNAAKRKAEEAKKSANNKKAKTSGGVGGRGRRPK) is disordered.

This sequence belongs to the XPG/RAD2 endonuclease family. FEN1 subfamily. In terms of assembly, interacts with PCNA. Three molecules of FEN1 bind to one PCNA trimer with each molecule binding to one PCNA monomer. PCNA stimulates the nuclease activity without altering cleavage specificity. Mg(2+) serves as cofactor. Phosphorylated. Phosphorylation upon DNA damage induces relocalization to the nuclear plasma.

Its subcellular location is the nucleus. It is found in the nucleolus. It localises to the nucleoplasm. The protein localises to the mitochondrion. Structure-specific nuclease with 5'-flap endonuclease and 5'-3' exonuclease activities involved in DNA replication and repair. During DNA replication, cleaves the 5'-overhanging flap structure that is generated by displacement synthesis when DNA polymerase encounters the 5'-end of a downstream Okazaki fragment. It enters the flap from the 5'-end and then tracks to cleave the flap base, leaving a nick for ligation. Also involved in the long patch base excision repair (LP-BER) pathway, by cleaving within the apurinic/apyrimidinic (AP) site-terminated flap. Acts as a genome stabilization factor that prevents flaps from equilibrating into structures that lead to duplications and deletions. Also possesses 5'-3' exonuclease activity on nicked or gapped double-stranded DNA, and exhibits RNase H activity. Also involved in replication and repair of rDNA and in repairing mitochondrial DNA. This Drosophila erecta (Fruit fly) protein is Flap endonuclease 1.